The chain runs to 87 residues: U3-theraphotoxin-Cg1c (87 aa).

The first 23 residues, 1-23 (MRTFTLIAILTCAVLVIFHVSAA), serve as a signal peptide directing secretion. The propeptide occupies 24–51 (EELEAQDVIQPEDIFTGVATLEEDRIFE). 3 cysteine pairs are disulfide-bonded: cysteine 52/cysteine 65, cysteine 56/cysteine 79, and cysteine 73/cysteine 84.

This sequence belongs to the neurotoxin 12 (Hwtx-2) family. 03 (juruin) subfamily. Expressed by the venom gland.

Its subcellular location is the secreted. Its function is as follows. Probable ion channel inhibitor. The chain is U3-theraphotoxin-Cg1c from Chilobrachys guangxiensis (Chinese earth tiger tarantula).